Consider the following 117-residue polypeptide: MPRAVNGTIHKNRRKKVLAKAKGFRGGRSKLFRTAKSAVMKAGQWAYRDRRKKKSEFRKLWITRINAAVRENGMSYSKFIHALKTHGINLDRKTLADLAYNHKEVFNAIVEKTKVAK.

It belongs to the bacterial ribosomal protein bL20 family.

Functionally, binds directly to 23S ribosomal RNA and is necessary for the in vitro assembly process of the 50S ribosomal subunit. It is not involved in the protein synthesizing functions of that subunit. This is Large ribosomal subunit protein bL20 from Leptospira biflexa serovar Patoc (strain Patoc 1 / Ames).